A 154-amino-acid polypeptide reads, in one-letter code: Endoribonuclease YbeY (154 aa).

Residues H114, H118, and H124 each coordinate Zn(2+).

This sequence belongs to the endoribonuclease YbeY family. It depends on Zn(2+) as a cofactor.

It localises to the cytoplasm. Single strand-specific metallo-endoribonuclease involved in late-stage 70S ribosome quality control and in maturation of the 3' terminus of the 16S rRNA. This chain is Endoribonuclease YbeY, found in Anaplasma phagocytophilum (strain HZ).